The chain runs to 242 residues: Tryptophan synthase alpha chain (242 aa).

Catalysis depends on proton acceptor residues glutamate 31 and aspartate 42.

The protein belongs to the TrpA family. Tetramer of two alpha and two beta chains.

The catalysed reaction is (1S,2R)-1-C-(indol-3-yl)glycerol 3-phosphate + L-serine = D-glyceraldehyde 3-phosphate + L-tryptophan + H2O. The protein operates within amino-acid biosynthesis; L-tryptophan biosynthesis; L-tryptophan from chorismate: step 5/5. The alpha subunit is responsible for the aldol cleavage of indoleglycerol phosphate to indole and glyceraldehyde 3-phosphate. This is Tryptophan synthase alpha chain from Staphylococcus aureus (strain MRSA252).